The primary structure comprises 602 residues: Elongation factor 4 (602 aa).

The 183-residue stretch at 2–184 (KKIRNFAIIA…RIVRDIPPPK (183 aa)) folds into the tr-type G domain. Residues 14-19 (DHGKST) and 131-134 (NKID) each bind GTP.

This sequence belongs to the TRAFAC class translation factor GTPase superfamily. Classic translation factor GTPase family. LepA subfamily.

It localises to the cell membrane. It carries out the reaction GTP + H2O = GDP + phosphate + H(+). In terms of biological role, required for accurate and efficient protein synthesis under certain stress conditions. May act as a fidelity factor of the translation reaction, by catalyzing a one-codon backward translocation of tRNAs on improperly translocated ribosomes. Back-translocation proceeds from a post-translocation (POST) complex to a pre-translocation (PRE) complex, thus giving elongation factor G a second chance to translocate the tRNAs correctly. Binds to ribosomes in a GTP-dependent manner. This is Elongation factor 4 from Baumannia cicadellinicola subsp. Homalodisca coagulata.